Reading from the N-terminus, the 84-residue chain is Gomesin (84 aa).

Positions 1–23 (MNRTRLFACLLLAVLILVHESNA) are cleaved as a signal peptide. The residue at position 24 (glutamine 24) is a Pyrrolidone carboxylic acid. Intrachain disulfides connect cysteine 25–cysteine 38 and cysteine 29–cysteine 34. Arginine 41 bears the Arginine amide mark. A propeptide spanning residues 42 to 84 (GKRSLDETNVGTSDVEKRAFDDSNVPSLVEERELEDEGSFIFD) is cleaved from the precursor.

In hemocytes only, but not in all hemocytes observed.

Its subcellular location is the secreted. Active against several Gram-positive bacteria such as Bacillus spp, Staphylococcus spp and E.faecalis, several Gram-negative bacteria such as E.coli, K.pneumoniae, P.aeruginosa and Salmonella spp, filamentous fungi such as N.crassa, T.viridae and yeasts such as C.albicans. It is active against the parasite L.amazonensis as well. It shows hemolytic activity. The sequence is that of Gomesin from Acanthoscurria gomesiana (Tarantula spider).